The primary structure comprises 417 residues: Type II methyltransferase M.KpnI (417 aa).

This sequence belongs to the N(4)/N(6)-methyltransferase family.

The catalysed reaction is a 2'-deoxyadenosine in DNA + S-adenosyl-L-methionine = an N(6)-methyl-2'-deoxyadenosine in DNA + S-adenosyl-L-homocysteine + H(+). A beta subtype methylase, recognizes the double-stranded sequence 5'-GGTACC-3', methylates A-4 on both strands, and protects the DNA from cleavage by the KpnI endonuclease. The chain is Type II methyltransferase M.KpnI from Klebsiella pneumoniae.